A 190-amino-acid polypeptide reads, in one-letter code: UPF0316 protein Mboo_0605 (190 aa).

The next 3 helical transmembrane spans lie at 3-23 (IGTF…RIAE), 41-61 (LAAY…GLVL), and 67-87 (FWNL…GMEI).

It belongs to the UPF0316 family.

The protein resides in the cell membrane. The chain is UPF0316 protein Mboo_0605 from Methanoregula boonei (strain DSM 21154 / JCM 14090 / 6A8).